The chain runs to 280 residues: Ribosomal RNA large subunit methyltransferase J (280 aa).

S-adenosyl-L-methionine is bound by residues H19, H42, S100, E118, 143-144 (DG), and D164. D164 (proton acceptor) is an active-site residue.

Belongs to the RlmJ family. As to quaternary structure, monomer.

It catalyses the reaction adenosine(2030) in 23S rRNA + S-adenosyl-L-methionine = N(6)-methyladenosine(2030) in 23S rRNA + S-adenosyl-L-homocysteine + H(+). In terms of biological role, specifically methylates the adenine in position 2030 of 23S rRNA. Nascent 23S rRNA seems to be the natural substrate. Appears to be not necessary for ribosome assembly. Required for the utilization of extracellular DNA as the sole source of carbon and energy. This chain is Ribosomal RNA large subunit methyltransferase J, found in Escherichia coli (strain K12).